Consider the following 138-residue polypeptide: Large ribosomal subunit protein uL16 (138 aa).

Basic residues predominate over residues 1 to 19; it reads MLIPKRVKYRRQHRPHRSG. Residues 1-24 are disordered; the sequence is MLIPKRVKYRRQHRPHRSGVSKGG.

This sequence belongs to the universal ribosomal protein uL16 family. As to quaternary structure, part of the 50S ribosomal subunit.

Functionally, binds 23S rRNA and is also seen to make contacts with the A and possibly P site tRNAs. In Corynebacterium jeikeium (strain K411), this protein is Large ribosomal subunit protein uL16.